Reading from the N-terminus, the 302-residue chain is UPF0761 membrane protein Tola_0461 (302 aa).

Helical transmembrane passes span 51–71 (YVSL…LSWL), 111–131 (TTSI…AAID), 150–170 (ITMY…SLLL), 188–208 (LGGG…ILLL), 222–242 (ALLG…GFGY), and 256–276 (ALAG…VVLL).

The protein belongs to the UPF0761 family.

It is found in the cell inner membrane. This chain is UPF0761 membrane protein Tola_0461, found in Tolumonas auensis (strain DSM 9187 / NBRC 110442 / TA 4).